The sequence spans 492 residues: Steroid 21-hydroxylase (492 aa).

The heme b site is built by Arg91 and Lys120. Residue Arg231 coordinates 17alpha-hydroxyprogesterone. Residue Arg231 coordinates progesterone. 3 residues coordinate heme b: His363, Arg424, and Cys426.

It belongs to the cytochrome P450 family. Heme b serves as cofactor.

The protein localises to the endoplasmic reticulum membrane. The protein resides in the microsome membrane. The catalysed reaction is 17alpha-hydroxyprogesterone + reduced [NADPH--hemoprotein reductase] + O2 = 11-deoxycortisol + oxidized [NADPH--hemoprotein reductase] + H2O + H(+). It catalyses the reaction progesterone + reduced [NADPH--hemoprotein reductase] + O2 = 21-hydroxyprogesterone + oxidized [NADPH--hemoprotein reductase] + H2O + H(+). Functionally, specifically catalyzes the 21-hydroxylation of steroids. Required for the adrenal synthesis of mineralocorticoids and glucocorticoids. This chain is Steroid 21-hydroxylase (CYP21), found in Felis catus (Cat).